Here is a 325-residue protein sequence, read N- to C-terminus: Tetraacyldisaccharide 4'-kinase (325 aa).

An ATP-binding site is contributed by 55–62 (TAGGNGKT).

This sequence belongs to the LpxK family.

It carries out the reaction a lipid A disaccharide + ATP = a lipid IVA + ADP + H(+). Its pathway is glycolipid biosynthesis; lipid IV(A) biosynthesis; lipid IV(A) from (3R)-3-hydroxytetradecanoyl-[acyl-carrier-protein] and UDP-N-acetyl-alpha-D-glucosamine: step 6/6. Its function is as follows. Transfers the gamma-phosphate of ATP to the 4'-position of a tetraacyldisaccharide 1-phosphate intermediate (termed DS-1-P) to form tetraacyldisaccharide 1,4'-bis-phosphate (lipid IVA). This is Tetraacyldisaccharide 4'-kinase from Salmonella paratyphi C (strain RKS4594).